A 193-amino-acid chain; its full sequence is Major intrinsically disordered NOTCH2-binding receptor 1-like homolog (193 aa).

Phosphoserine is present on S82. A glycan (N-linked (GlcNAc...) asparagine) is linked at N128. A helical transmembrane segment spans residues 172 to 192 (GLILLLVASILVTIVTLSTIF).

Belongs to the MINAR family. As to quaternary structure, interacts with NOTCH2. Widely expressed in the cortex and Purkinje cells of cerebellum. Expressed in the inner ear, mainly in the hair cells, spiral ganglia, the spiral limbus, and the stria vascularis.

The protein resides in the lysosome membrane. It localises to the endoplasmic reticulum membrane. Its function is as follows. Binds cholesterol and may regulate the distribution and homeostasis of cholesterol in hair cells. May play a role in angiogenesis. In Mus musculus (Mouse), this protein is Major intrinsically disordered NOTCH2-binding receptor 1-like homolog.